Consider the following 157-residue polypeptide: Small ribosomal subunit protein uS9 (157 aa).

Belongs to the universal ribosomal protein uS9 family.

The protein is Small ribosomal subunit protein uS9 of Caulobacter vibrioides (strain ATCC 19089 / CIP 103742 / CB 15) (Caulobacter crescentus).